The chain runs to 1180 residues: DNA-directed RNA polymerase subunit beta' (1180 aa).

Zn(2+) contacts are provided by Cys-60, Cys-62, Cys-75, and Cys-78. Positions 449, 451, and 453 each coordinate Mg(2+). Residues Cys-792, Cys-872, Cys-879, and Cys-882 each coordinate Zn(2+).

Belongs to the RNA polymerase beta' chain family. In terms of assembly, the RNAP catalytic core consists of 2 alpha, 1 beta, 1 beta' and 1 omega subunit. When a sigma factor is associated with the core the holoenzyme is formed, which can initiate transcription. The cofactor is Mg(2+). Zn(2+) is required as a cofactor.

It catalyses the reaction RNA(n) + a ribonucleoside 5'-triphosphate = RNA(n+1) + diphosphate. DNA-dependent RNA polymerase catalyzes the transcription of DNA into RNA using the four ribonucleoside triphosphates as substrates. The protein is DNA-directed RNA polymerase subunit beta' of Heliobacterium modesticaldum (strain ATCC 51547 / Ice1).